The chain runs to 466 residues: uncharacterized protein (466 aa).

The 196-residue stretch at Asn4–Leu199 folds into the C2 NT-type domain. 3 disordered regions span residues Ala262–Ile298, Leu374–Met393, and Glu400–Arg452. Positions Thr266–Ile298 are enriched in polar residues. 2 positions are modified to phosphoserine: Ser433 and Ser439.

To S.pombe SpCC1494.08c.

This is an uncharacterized protein from Saccharomyces cerevisiae (strain ATCC 204508 / S288c) (Baker's yeast).